Here is a 242-residue protein sequence, read N- to C-terminus: 2-C-methyl-D-erythritol 4-phosphate cytidylyltransferase (242 aa).

Belongs to the IspD/TarI cytidylyltransferase family. IspD subfamily.

It catalyses the reaction 2-C-methyl-D-erythritol 4-phosphate + CTP + H(+) = 4-CDP-2-C-methyl-D-erythritol + diphosphate. Its pathway is isoprenoid biosynthesis; isopentenyl diphosphate biosynthesis via DXP pathway; isopentenyl diphosphate from 1-deoxy-D-xylulose 5-phosphate: step 2/6. Catalyzes the formation of 4-diphosphocytidyl-2-C-methyl-D-erythritol from CTP and 2-C-methyl-D-erythritol 4-phosphate (MEP). This chain is 2-C-methyl-D-erythritol 4-phosphate cytidylyltransferase, found in Halorhodospira halophila (strain DSM 244 / SL1) (Ectothiorhodospira halophila (strain DSM 244 / SL1)).